A 184-amino-acid polypeptide reads, in one-letter code: Large ribosomal subunit protein uL5 (184 aa).

This sequence belongs to the universal ribosomal protein uL5 family. In terms of assembly, part of the 50S ribosomal subunit; part of the 5S rRNA/L5/L18/L25 subcomplex. Contacts the 5S rRNA and the P site tRNA. Forms a bridge to the 30S subunit in the 70S ribosome.

Functionally, this is one of the proteins that bind and probably mediate the attachment of the 5S RNA into the large ribosomal subunit, where it forms part of the central protuberance. In the 70S ribosome it contacts protein S13 of the 30S subunit (bridge B1b), connecting the 2 subunits; this bridge is implicated in subunit movement. Contacts the P site tRNA; the 5S rRNA and some of its associated proteins might help stabilize positioning of ribosome-bound tRNAs. In Wolinella succinogenes (strain ATCC 29543 / DSM 1740 / CCUG 13145 / JCM 31913 / LMG 7466 / NCTC 11488 / FDC 602W) (Vibrio succinogenes), this protein is Large ribosomal subunit protein uL5.